A 92-amino-acid polypeptide reads, in one-letter code: Alpha-conotoxin FrXXA 2 (92 aa).

An N-terminal signal peptide occupies residues methionine 1–glycine 24. A propeptide spanning residues glutamine 25–arginine 45 is cleaved from the precursor. Cystine bridges form between cysteine 63–cysteine 72, cysteine 68–cysteine 80, cysteine 73–cysteine 90, and cysteine 78–cysteine 92.

This sequence belongs to the conotoxin D superfamily. Homodimer; disulfide-linked. In terms of processing, the homodimer contains 10 disulfide bonds. In terms of tissue distribution, expressed by the venom duct.

It is found in the secreted. Functionally, alpha-conotoxins act on postsynaptic membranes, they bind to the nicotinic acetylcholine receptors (nAChR) and thus inhibit them. Through its two C-terminal domains, this homodimeric protein would bind to two nAChR allosteric sites, located outside the nAChR C-loop of the principal binding face and at the adjacent binding interface in a clockwise direction. Component 4b which seems to correspond to this toxin blocks both neuronal and muscular subtypes: human alpha-7/CHRNA7 (IC(50)=125 nM), human alpha-3-beta-2 (CHRNA3-CHRNB2) (IC(50)=282 nM), human alpha-4-beta-2 (CHRNA4-CHRNB2) (IC(50)=697 nM), mouse adult muscular subtype alpha-1-beta-1-delta-epsilon (CHRNA1-CHRNB1-CHRND-CHRNE) (IC(50)=351 nM), and mouse fetal muscular subtype alpha-1-beta-1-gamma-delta (CHRNA1-CHRNB1-CHRNG-CHRND) (IC(50)=447 nM). It shows different dissociation rates towards the different subtypes, with a very slow rate towards alpha-7 subtype (almost irreversible), followed by the adult muscular subtype, the fetal muscular subtype, alpha-3-beta-2 and alpha-4-beta-2 (almost entirely reversible within a few minutes of washing). This chain is Alpha-conotoxin FrXXA 2, found in Conus fergusoni (Ferguson's cone).